The chain runs to 238 residues: Serine protease SplE (238 aa).

The N-terminal stretch at 1 to 36 (MNKNIIIKSIAALTILTSVTGVGTTMVEGIQQTAKA) is a signal peptide. Residues His-75, Asp-113, and Ser-191 each act as charge relay system in the active site.

This sequence belongs to the peptidase S1B family.

It localises to the secreted. The protein is Serine protease SplE (splE) of Staphylococcus aureus.